Here is a 91-residue protein sequence, read N- to C-terminus: Lipolysis-activating peptide 1-alpha chain (91 aa).

An N-terminal signal peptide occupies residues 1–22 (MMKLVLFGIIVILFSLIGSIHG). Positions 24–87 (SGNYPLNPYG…VWNAVKKHCK (64 aa)) constitute an LCN-type CS-alpha/beta domain. 3 cysteine pairs are disulfide-bonded: Cys-38/Cys-61, Cys-47/Cys-66, and Cys-51/Cys-68.

The protein belongs to the long (3 C-C) scorpion toxin superfamily. As to quaternary structure, monomer (edited version) and heterodimer (non-edited version) of this alpha chain and a beta chain (AC P84809). In terms of tissue distribution, expressed by the venom gland.

It is found in the secreted. Its function is as follows. The heterodimer non-edited LVP1 induces lipolysis in rat adipocytes. Induction of lipolysis by LVP1 appears to be mediated through the beta-2 adrenergic receptor pathway (ADRB2). Intracerebroventricular injection is not toxic to mice. The edited BmKBTx-like, similar to beta-toxins, may modulate voltage-gated sodium channels (Nav) and may block voltage-gated potassium channels (Kv). This is Lipolysis-activating peptide 1-alpha chain from Buthus occitanus tunetanus (Common European scorpion).